Reading from the N-terminus, the 309-residue chain is Methionyl-tRNA formyltransferase (309 aa).

Residue 110–113 (SLLP) coordinates (6S)-5,6,7,8-tetrahydrofolate.

This sequence belongs to the Fmt family.

It catalyses the reaction L-methionyl-tRNA(fMet) + (6R)-10-formyltetrahydrofolate = N-formyl-L-methionyl-tRNA(fMet) + (6S)-5,6,7,8-tetrahydrofolate + H(+). Attaches a formyl group to the free amino group of methionyl-tRNA(fMet). The formyl group appears to play a dual role in the initiator identity of N-formylmethionyl-tRNA by promoting its recognition by IF2 and preventing the misappropriation of this tRNA by the elongation apparatus. This Caldanaerobacter subterraneus subsp. tengcongensis (strain DSM 15242 / JCM 11007 / NBRC 100824 / MB4) (Thermoanaerobacter tengcongensis) protein is Methionyl-tRNA formyltransferase.